The following is a 118-amino-acid chain: MARVKRGVVARARHKKILKQAKGYYGARSRVYRVAFQAVIKAGQYAYRDRRQRKRQFRQLWIARINAAARQNGLSYSRFIDGLKKASIEIDRKILADIAVFDKVAFAALVEKAKSALA.

It belongs to the bacterial ribosomal protein bL20 family.

Binds directly to 23S ribosomal RNA and is necessary for the in vitro assembly process of the 50S ribosomal subunit. It is not involved in the protein synthesizing functions of that subunit. The protein is Large ribosomal subunit protein bL20 of Photorhabdus laumondii subsp. laumondii (strain DSM 15139 / CIP 105565 / TT01) (Photorhabdus luminescens subsp. laumondii).